The sequence spans 352 residues: Heat-inducible transcription repressor HrcA (352 aa).

It belongs to the HrcA family.

Negative regulator of class I heat shock genes (grpE-dnaK-dnaJ and groELS operons). Prevents heat-shock induction of these operons. The protein is Heat-inducible transcription repressor HrcA of Latilactobacillus sakei (Lactobacillus sakei).